The sequence spans 249 residues: Small ribosomal subunit protein eS6 (249 aa).

A Glycyl lysine isopeptide (Lys-Gly) (interchain with G-Cter in SUMO2) cross-link involves residue Lys14. An ADP-ribosyl glutamic acid modification is found at Glu35. At Arg137 the chain carries (3R)-3-hydroxyarginine. Ser148 bears the Phosphoserine mark. An N6-acetyllysine modification is found at Lys211. Basic and acidic residues predominate over residues Met217–Ala229. A disordered region spans residues Met217–Lys249. 6 positions are modified to phosphoserine: Ser235, Ser236, Ser240, Ser242, Ser244, and Ser247. A compositionally biased stretch (low complexity) spans Ser236 to Lys249.

This sequence belongs to the eukaryotic ribosomal protein eS6 family. In terms of assembly, component of the small ribosomal subunit. Part of the small subunit (SSU) processome, composed of more than 70 proteins and the RNA chaperone small nucleolar RNA (snoRNA) U3. In terms of processing, ribosomal protein S6 is the major substrate of protein kinases in eukaryote ribosomes. The phosphorylation is stimulated by growth factors, tumor promoting agents, and mitogens. It is dephosphorylated at growth arrest. Phosphorylated at Ser-235 and Ser-236 by RPS6KA1 and RPS6KA3; phosphorylation at these sites facilitates the assembly of the pre-initiation complex. Post-translationally, specifically hydroxylated (with R stereochemistry) at C-3 of Arg-137 by KDM8. Mono-ADP-ribosylation at Glu-35 by PARP16 inhibits polysome assembly and mRNA loading, thereby inhibiting protein translation.

Its subcellular location is the cytoplasm. It is found in the nucleus. It localises to the nucleolus. Functionally, component of the 40S small ribosomal subunit. Plays an important role in controlling cell growth and proliferation through the selective translation of particular classes of mRNA. Part of the small subunit (SSU) processome, first precursor of the small eukaryotic ribosomal subunit. During the assembly of the SSU processome in the nucleolus, many ribosome biogenesis factors, an RNA chaperone and ribosomal proteins associate with the nascent pre-rRNA and work in concert to generate RNA folding, modifications, rearrangements and cleavage as well as targeted degradation of pre-ribosomal RNA by the RNA exosome. This Oryctolagus cuniculus (Rabbit) protein is Small ribosomal subunit protein eS6 (RPS6).